A 102-amino-acid polypeptide reads, in one-letter code: uncharacterized protein (102 aa).

2 disordered regions span residues 1 to 21 (MKRM…GAGE) and 33 to 71 (GSGT…SACT). Residues 1–79 (MKRMIRSHGR…CTRTDHQKAD (79 aa)) are Extracellular-facing. A compositionally biased stretch (polar residues) spans 56–71 (SSGTRRGSANETSACT). N-linked (GlcNAc...) asparagine; by host glycosylation is present at asparagine 65. Residues 80 to 97 (IGLWFMFLVFGLCSWLAM) form a helical membrane-spanning segment. Over 98-102 (RYRAQ) the chain is Cytoplasmic.

This sequence belongs to the HHV-5 UL15A protein family.

The protein localises to the host membrane. This is an uncharacterized protein from Human cytomegalovirus (strain Merlin) (HHV-5).